Here is a 927-residue protein sequence, read N- to C-terminus: Dual serine/threonine and tyrosine protein kinase (927 aa).

Residues 1–21 form a disordered region; that stretch reads MEADGQSWAGESVSGPGPGGG. Residues 393-429 adopt a coiled-coil conformation; it reads RKKENELYESLMNIANRKQEEMKDMIVETLNTMKEEL. A Protein kinase domain is found at 650–904; sequence PKLGQELGRG…PLLGIVQPML (255 aa). Residues 656–664 and K679 contribute to the ATP site; that span reads LGRGQYGVV. Residue D775 is the Proton acceptor of the active site.

The protein belongs to the protein kinase superfamily. Ser/Thr protein kinase family. As to expression, expressed in brain, heart, skeletal muscle, kidney and lung. Expressed in maturing tubular epithelia, with the most prominent expression in the medulla and the papilla. Expressed in thin ascending limb of the loop of Henle and the distal convoluted tubule. Expressed in all layers of transitional ureteric epithelium and in the ureteric smooth-muscle cells (at protein level). Widely expressed. Highly expressed in many brain regions, including in cerebellum, olfactory, hippocampus and cerebral cortex.

It localises to the cytoplasm. The protein localises to the cell membrane. The protein resides in the apical cell membrane. Its subcellular location is the basolateral cell membrane. It is found in the cell junction. The catalysed reaction is L-seryl-[protein] + ATP = O-phospho-L-seryl-[protein] + ADP + H(+). The enzyme catalyses L-threonyl-[protein] + ATP = O-phospho-L-threonyl-[protein] + ADP + H(+). It catalyses the reaction L-tyrosyl-[protein] + ATP = O-phospho-L-tyrosyl-[protein] + ADP + H(+). Its function is as follows. Acts as a positive regulator of ERK phosphorylation downstream of fibroblast growth factor-receptor activation. Involved in the regulation of both caspase-dependent apoptosis and caspase-independent cell death. In the skin, it plays a predominant role in suppressing caspase-dependent apoptosis in response to UV stress in a range of dermal cell types. The polypeptide is Dual serine/threonine and tyrosine protein kinase (Dstyk) (Mus musculus (Mouse)).